Consider the following 373-residue polypeptide: tRNA-specific 2-thiouridylase MnmA (373 aa).

Residues 12–19 (GMSGGVDS) and methionine 38 contribute to the ATP site. The segment at 98-100 (NPD) is interaction with target base in tRNA. Cysteine 103 (nucleophile) is an active-site residue. Cysteines 103 and 200 form a disulfide. Residue glycine 127 participates in ATP binding. Residues 150–152 (KDQ) form an interaction with tRNA region. The active-site Cysteine persulfide intermediate is the cysteine 200. Residues 312-313 (RY) are interaction with tRNA.

The protein belongs to the MnmA/TRMU family.

It is found in the cytoplasm. The catalysed reaction is S-sulfanyl-L-cysteinyl-[protein] + uridine(34) in tRNA + AH2 + ATP = 2-thiouridine(34) in tRNA + L-cysteinyl-[protein] + A + AMP + diphosphate + H(+). Catalyzes the 2-thiolation of uridine at the wobble position (U34) of tRNA, leading to the formation of s(2)U34. The polypeptide is tRNA-specific 2-thiouridylase MnmA (Streptococcus agalactiae serotype Ia (strain ATCC 27591 / A909 / CDC SS700)).